Consider the following 1141-residue polypeptide: IgM protease (1141 aa).

An N-terminal signal peptide occupies residues 1–32 (MNIQERFSLRKSAVGLVSVSLLCAIYTSTVAA). Cysteine 195 functions as the Nucleophile in the catalytic mechanism. 4 disordered regions span residues 518-544 (PDLPVGDRSTVSDVDSLSSQETSSTNL), 725-749 (EKDSIQAGETEIAEPTSSESTNVET), 781-805 (LEKDSIQAGETEIAEPTSSESTNVE), and 839-860 (EKDSIQAGETEIAEPTSSESTS). A compositionally biased stretch (polar residues) spans 526–544 (STVSDVDSLSSQETSSTNL). Composition is skewed to low complexity over residues 738–749 (EPTSSESTNVET) and 795–805 (EPTSSESTNVE). The helical transmembrane segment at 1119-1136 (IMGVGLLTLVLGSALGLL) threads the bilayer.

It belongs to the peptidase C66 family.

Its subcellular location is the cell membrane. It is found in the secreted. Its activity is regulated as follows. IgM cleavage is inhibited by iodoacetamide but not by AEBSF, bestatin, E-64, Z-LVG-CHN(2), or EDTA. Catalyzes the specific cleavage of porcine IgM bound to the bacterial surface. Can degrade only IgM but neither IgG nor IgA, and is host specific, as it exclusively cleaves porcine IgM but not IgM from six other species, including human, mouse and a closely related member of the Suidae family. Promotes survival in porcine blood. Is thus involved in a so-far-unknown mechanism of host-pathogen interaction at an early stage of the host immune response. The sequence is that of IgM protease (ide) from Streptococcus suis (strain P1/7).